Reading from the N-terminus, the 62-residue chain is Calmodulin regulator protein PCP4 (62 aa).

The tract at residues 1–39 is disordered; sequence MSERQGAGATNGKDKTSGENDGQKKVQEEFDIDMDAPET. Positions 12-28 are enriched in basic and acidic residues; it reads GKDKTSGENDGQKKVQE. The tract at residues 28 to 40 is acidic; binds calcium and is required for modulating the calcium-binding kinetics of calmodulin; sequence EEFDIDMDAPETE. Residues 39 to 62 enclose the IQ domain; sequence TERAAVAIQSQFRKFQKKKAGSQS.

Belongs to the PCP4 family. In terms of assembly, binds to both calcium-free and calcium-bound calmodulin. The affinity for the calcium-bound form is 50-fold greater.

Its function is as follows. Functions as a modulator of calcium-binding by calmodulin. Thereby, regulates calmodulin activity and the different processes it controls. For instance, may play a role in neuronal differentiation through activation of calmodulin-dependent kinase signaling pathways. This is Calmodulin regulator protein PCP4 from Homo sapiens (Human).